We begin with the raw amino-acid sequence, 289 residues long: 4-hydroxy-tetrahydrodipicolinate synthase (289 aa).

Threonine 44 lines the pyruvate pocket. Residue tyrosine 132 is the Proton donor/acceptor of the active site. Lysine 161 (schiff-base intermediate with substrate) is an active-site residue. Isoleucine 201 lines the pyruvate pocket.

This sequence belongs to the DapA family. Homotetramer; dimer of dimers.

The protein localises to the cytoplasm. It carries out the reaction L-aspartate 4-semialdehyde + pyruvate = (2S,4S)-4-hydroxy-2,3,4,5-tetrahydrodipicolinate + H2O + H(+). The protein operates within amino-acid biosynthesis; L-lysine biosynthesis via DAP pathway; (S)-tetrahydrodipicolinate from L-aspartate: step 3/4. Its function is as follows. Catalyzes the condensation of (S)-aspartate-beta-semialdehyde [(S)-ASA] and pyruvate to 4-hydroxy-tetrahydrodipicolinate (HTPA). This Methanocaldococcus jannaschii (strain ATCC 43067 / DSM 2661 / JAL-1 / JCM 10045 / NBRC 100440) (Methanococcus jannaschii) protein is 4-hydroxy-tetrahydrodipicolinate synthase.